A 626-amino-acid chain; its full sequence is MHYPKVYDVIVIGGGHAGTEAALAAARMGRQTLLLTHNIETLGQMSCNPAIGGIGKSHLVREIDALGGAMALAADKGGIQFRILNSRKGAAVRATRAQADRVRYKAAIRETLENQANLDIFQQAADDLIVEGDTVKGVVTQMGIRFDAKTVVLTTGTFLGGVIHVGLEKSSGGRAGDPPSIALAQRLRELKLPVGRLKTGTPPRIDARSVDFSVMTTQPGDFPSPVMSFMGDVSMHPEQVNCYITHTNEKTHDIIRGGLDRSPMYTGVIEGVGPRYCPSIEDKIHRFSDKDSHQVFLEPEGLDTHELYPNGISTSLPFDVQFELVRSIRGMENAHILRPGYAIEYDYFNPQALKFTLETKAINGLYFAGQINGTTGYEEAGAQGLLAGLNAARRAWEQEEWTPKRDQAYMGVLVDDLITLGTKEPYRMFTSRAEYRLMLREDNADQRLTTIGRELGLVDDVRWAAYCEKMEAVERETSRLQHVWAAPNNPMGKKFVEMTGADLSKECSAIDLLKRPNINFGQIAELTGSEVSQQVGEQIEIAVKYEGYINRQHEDVAQLKRLEETKIPADFDYDVVSGLSREITQKLKTVRPETLAQASRIPGVTPAAVQLVMITIRKNNMTKKTA.

Residue 13 to 18 coordinates FAD; the sequence is GGGHAG. 273-287 lines the NAD(+) pocket; that stretch reads GPRYCPSIEDKIHRF.

This sequence belongs to the MnmG family. Homodimer. Heterotetramer of two MnmE and two MnmG subunits. FAD is required as a cofactor.

It is found in the cytoplasm. In terms of biological role, NAD-binding protein involved in the addition of a carboxymethylaminomethyl (cmnm) group at the wobble position (U34) of certain tRNAs, forming tRNA-cmnm(5)s(2)U34. The protein is tRNA uridine 5-carboxymethylaminomethyl modification enzyme MnmG of Acinetobacter baumannii (strain AYE).